The chain runs to 372 residues: Glutamate 5-kinase (372 aa).

Residue K14 participates in ATP binding. Substrate is bound by residues S54, D141, and N153. 173–174 (TD) is a binding site for ATP. The PUA domain occupies 280 to 358 (RGRVIIDAGA…SEIESVLGHL (79 aa)).

Belongs to the glutamate 5-kinase family.

The protein resides in the cytoplasm. It catalyses the reaction L-glutamate + ATP = L-glutamyl 5-phosphate + ADP. It participates in amino-acid biosynthesis; L-proline biosynthesis; L-glutamate 5-semialdehyde from L-glutamate: step 1/2. Catalyzes the transfer of a phosphate group to glutamate to form L-glutamate 5-phosphate. The protein is Glutamate 5-kinase of Cupriavidus metallidurans (strain ATCC 43123 / DSM 2839 / NBRC 102507 / CH34) (Ralstonia metallidurans).